A 312-amino-acid chain; its full sequence is E3 ubiquitin-protein ligase RNF126-B (312 aa).

Zn(2+) contacts are provided by Cys13, Cys16, Cys29, and Cys32. The C4-type zinc finger occupies 13 to 32; the sequence is CHSCTAEITPRLPEYTCPRC. Disordered stretches follow at residues 41–63 and 96–139; these read PETSRNSESNSSNNSGTDQNRPS and GTSG…RNEG. Positions 44-55 are enriched in low complexity; sequence SRNSESNSSNNS. The segment covering 102-115 has biased composition (basic and acidic residues); it reads EETRDGESRREHQS. Residues 124–134 show a composition bias toward basic residues; it reads PRARMSTRRGA. An RING-type zinc finger spans residues 228–269; that stretch reads CPVCKEDYTVGESVRQLPCNHLFHNDCIIPWLEQHDTCPVCR. The segment at 275–312 is disordered; it reads QNTATNPPGLTDMTFSSSSTSSSSSTSPTDENNTANNS. Residues 290–301 show a composition bias toward low complexity; sequence SSSSTSSSSSTS. Polar residues predominate over residues 302 to 312; it reads PTDENNTANNS.

The protein localises to the cytoplasm. The protein resides in the nucleus. It catalyses the reaction S-ubiquitinyl-[E2 ubiquitin-conjugating enzyme]-L-cysteine + [acceptor protein]-L-lysine = [E2 ubiquitin-conjugating enzyme]-L-cysteine + N(6)-ubiquitinyl-[acceptor protein]-L-lysine.. Its pathway is protein modification; protein ubiquitination. Its function is as follows. E3 ubiquitin-protein ligase that mediates ubiquitination oF target proteins. Depending on the associated E2 ligase, mediates 'Lys-27'-, 'Lys-29'-, 'Lys-48'- and/or 'Lys-63'-linked polyubiquitination of substrates. Part of a BAG6-dependent quality control process ensuring that proteins of the secretory pathway that are mislocalized to the cytosol are degraded by the proteasome. Probably acts by providing the ubiquitin ligase activity associated with the BAG6 complex and be responsible for ubiquitination of the hydrophobic mislocalized proteins and their targeting to the proteasome. The protein is E3 ubiquitin-protein ligase RNF126-B of Xenopus laevis (African clawed frog).